Reading from the N-terminus, the 151-residue chain is uncharacterized protein (151 aa).

The Response regulatory domain maps to 2–133 (KTLIVEDNPK…VFVEAVHYSQ (132 aa)). D53 carries the post-translational modification 4-aspartylphosphate.

This is an uncharacterized protein from Sinorhizobium fredii (strain NBRC 101917 / NGR234).